Here is a 213-residue protein sequence, read N- to C-terminus: Uridine kinase (213 aa).

Residue 15–22 (GASASGKS) participates in ATP binding.

The protein belongs to the uridine kinase family.

The protein localises to the cytoplasm. It carries out the reaction uridine + ATP = UMP + ADP + H(+). It catalyses the reaction cytidine + ATP = CMP + ADP + H(+). It participates in pyrimidine metabolism; CTP biosynthesis via salvage pathway; CTP from cytidine: step 1/3. It functions in the pathway pyrimidine metabolism; UMP biosynthesis via salvage pathway; UMP from uridine: step 1/1. This Proteus mirabilis (strain HI4320) protein is Uridine kinase.